The chain runs to 190 residues: Holliday junction branch migration complex subunit RuvA (190 aa).

The interval 1–64 is domain I; that stretch reads MIGKLTGTLL…EDAQLLYGFG (64 aa). The domain II stretch occupies residues 65-143; that stretch reads THSERQAFRE…ADTGAQSLFV (79 aa). A flexible linker region spans residues 144–148; sequence NNDQN. Positions 148 to 190 are domain III; sequence NDIVQALMALGYSDKDAAAALKKLPPDVGVTEGIKLALKALAK.

The protein belongs to the RuvA family. In terms of assembly, homotetramer. Forms an RuvA(8)-RuvB(12)-Holliday junction (HJ) complex. HJ DNA is sandwiched between 2 RuvA tetramers; dsDNA enters through RuvA and exits via RuvB. An RuvB hexamer assembles on each DNA strand where it exits the tetramer. Each RuvB hexamer is contacted by two RuvA subunits (via domain III) on 2 adjacent RuvB subunits; this complex drives branch migration. In the full resolvosome a probable DNA-RuvA(4)-RuvB(12)-RuvC(2) complex forms which resolves the HJ.

It is found in the cytoplasm. Functionally, the RuvA-RuvB-RuvC complex processes Holliday junction (HJ) DNA during genetic recombination and DNA repair, while the RuvA-RuvB complex plays an important role in the rescue of blocked DNA replication forks via replication fork reversal (RFR). RuvA specifically binds to HJ cruciform DNA, conferring on it an open structure. The RuvB hexamer acts as an ATP-dependent pump, pulling dsDNA into and through the RuvAB complex. HJ branch migration allows RuvC to scan DNA until it finds its consensus sequence, where it cleaves and resolves the cruciform DNA. In Delftia acidovorans (strain DSM 14801 / SPH-1), this protein is Holliday junction branch migration complex subunit RuvA.